We begin with the raw amino-acid sequence, 558 residues long: Formate--tetrahydrofolate ligase (558 aa).

Residue 65 to 72 (TPAGEGKT) coordinates ATP.

Belongs to the formate--tetrahydrofolate ligase family.

It catalyses the reaction (6S)-5,6,7,8-tetrahydrofolate + formate + ATP = (6R)-10-formyltetrahydrofolate + ADP + phosphate. Its pathway is one-carbon metabolism; tetrahydrofolate interconversion. The sequence is that of Formate--tetrahydrofolate ligase from Methylobacterium nodulans (strain LMG 21967 / CNCM I-2342 / ORS 2060).